The primary structure comprises 635 residues: Threonine--tRNA ligase (635 aa).

The TGS domain occupies 1–61 (MVSIRLPDGS…DHDASLAIVT (61 aa)). The interval 242–533 (DHRKLGKQLD…LIEHHAGAMP (292 aa)) is catalytic. Positions 333, 384, and 510 each coordinate Zn(2+).

This sequence belongs to the class-II aminoacyl-tRNA synthetase family. As to quaternary structure, homodimer. Zn(2+) is required as a cofactor.

The protein resides in the cytoplasm. The enzyme catalyses tRNA(Thr) + L-threonine + ATP = L-threonyl-tRNA(Thr) + AMP + diphosphate + H(+). Functionally, catalyzes the attachment of threonine to tRNA(Thr) in a two-step reaction: L-threonine is first activated by ATP to form Thr-AMP and then transferred to the acceptor end of tRNA(Thr). Also edits incorrectly charged L-seryl-tRNA(Thr). This chain is Threonine--tRNA ligase, found in Burkholderia multivorans (strain ATCC 17616 / 249).